Here is a 331-residue protein sequence, read N- to C-terminus: Putative lipoprotein YerB (331 aa).

The first 19 residues, 1-19, serve as a signal peptide directing secretion; it reads MKKWMTVCALCFVFFLLVS. Residue C20 is the site of N-palmitoyl cysteine attachment. C20 carries the S-diacylglycerol cysteine lipid modification. Residue T97 is modified to Phosphothreonine. S103 carries the phosphoserine modification.

As to quaternary structure, interacts with PcrA. The interaction is not essential for cell viability or repair of UV-induced lesions.

Its subcellular location is the cell membrane. In Bacillus subtilis (strain 168), this protein is Putative lipoprotein YerB (yerB).